Reading from the N-terminus, the 219-residue chain is Regulatory protein YeiL (219 aa).

The tract at residues 19–97 (RLFHFLARDY…IEECWCLALP (79 aa)) is sensory domain. [4Fe-4S] cluster contacts are provided by Cys-68, Cys-91, Cys-93, and Cys-116. The segment at 111-131 (FLRKLCVTLSHKNYRNIVSLT) is dimer interface. Residues 136-199 (FPLVNRLAAF…KKGYLIKNRK (64 aa)) enclose the HTH crp-type domain. A DNA-binding region (H-T-H motif) is located at residues 158 to 181 (KHTQAAEYLGVSYRHLLYVLAQFI).

In terms of assembly, homodimer. [4Fe-4S] cluster serves as cofactor.

It is found in the cytoplasm. Its function is as follows. Transcription regulator involved in mid-term, stationary-phase viability under nitrogen starvation. Might control expression of the salvage pathways or in some other way repress the recycling of nucleobases to nucleic acids and enhance their use as general nitrogen sources during nitrogen-limited growth. The protein is Regulatory protein YeiL (yeiL) of Escherichia coli O157:H7.